The sequence spans 328 residues: Tryptophan--tRNA ligase (328 aa).

ATP contacts are provided by residues 9 to 11 (QPS) and 17 to 18 (GN). The 'HIGH' region motif lies at 10–18 (PSGVITIGN). Asp-132 lines the L-tryptophan pocket. ATP contacts are provided by residues 144–146 (GED), Ile-183, and 192–196 (KMSKS). Residues 192-196 (KMSKS) carry the 'KMSKS' region motif.

This sequence belongs to the class-I aminoacyl-tRNA synthetase family. In terms of assembly, homodimer.

It localises to the cytoplasm. The catalysed reaction is tRNA(Trp) + L-tryptophan + ATP = L-tryptophyl-tRNA(Trp) + AMP + diphosphate + H(+). Its activity is regulated as follows. Inhibited by indolmycin, a competitive inhibitor for tryptophan. In terms of biological role, catalyzes the attachment of tryptophan to tRNA(Trp). The chain is Tryptophan--tRNA ligase from Geobacillus stearothermophilus (Bacillus stearothermophilus).